The sequence spans 411 residues: MIAPSPKSSEEEGQKDEEVLQGEQGDFNDNDTEPENLGHRPLLMDSEDEEEEEKRSSDSDYEQAKAKYSDMSPVYRDKSGSGPTQDINTILLTSAQLSSDVGVETPKQEFDIFGAVPFFAVCAQQPQQEKNEKSLPQHRFPATGLQQEEFDVFTKAPFSKKVNVQECHAVGPETHPKSIDIFDFTPFQPFLTSTSKSESNEDLFGLVPFEEIMGSQQQKVKQRSLQKLSSRQRRTKQDMSKSNGKRHHGTPTSKKKTLKPTYRTPERARRHKKVGRRVSQTSNEFVTISDSKENIGAAVTDGNDRGNVLQLEESLLDPFGAKPFHPPDLSWHPLHQGLNDIRADHNTVLPKQPRQNSLHGSFHSADVLTMDDFGAMPFTELVVQSITLQQSQQSQPVELDPFGAAPFPSKQ.

Disordered stretches follow at residues 1–87 (MIAP…TQDI), 215–280 (SQQQ…RVSQ), and 392–411 (QQSQPVELDPFGAAPFPSKQ). Composition is skewed to basic and acidic residues over residues 8–18 (SSEEEGQKDEE) and 53–68 (EKRSSDSDYEQAKAKY). Residues 47-71 (EDEEEEEKRSSDSDYEQAKAKYSDM) adopt a coiled-coil conformation. Composition is skewed to basic residues over residues 220-234 (VKQRSLQKLSSRQRR) and 243-258 (NGKRHHGTPTSKKKTL).

This is Putative BMP-2-inducible kinase-like protein (BMP2KL) from Homo sapiens (Human).